The chain runs to 450 residues: Nuclear hormone receptor family member nhr-40 (450 aa).

Positions 28-103 (GTLCVVCSDF…MGMDPKAIQH (76 aa)) form a DNA-binding region, nuclear receptor. 2 NR C4-type zinc fingers span residues 31-51 (CVVC…CNGC) and 67-91 (CQFS…LKKC). One can recognise an NR LBD domain in the interval 173–450 (DVKAVIEDLL…LIDQLIIVGL (278 aa)).

The protein belongs to the nuclear hormone receptor family. As to expression, isoform b: Expressed in body wall muscle cells, pharyngeal muscles, rectal gland cells, vulval and uterine muscles and neurons in the head and ventral nerve cord. Isoform c: Expressed in body wall muscle cells, neurons in the head, nerve ring, ventral and dorsal nerve cords and epidermal cells in the tail.

The protein resides in the nucleus. Functionally, orphan nuclear receptor. Plays a role in morphogenesis and elongation during embryonic and larval development. Plays a role in muscle formation and motility. The protein is Nuclear hormone receptor family member nhr-40 of Caenorhabditis elegans.